A 200-amino-acid chain; its full sequence is Recombination protein RecR (200 aa).

Residues 57–72 (CRQCRTLTEQELCPQC) form a C4-type zinc finger. Residues 80-175 (TQLCVVEGPT…VASRIAHGVP (96 aa)) form the Toprim domain.

It belongs to the RecR family.

Functionally, may play a role in DNA repair. It seems to be involved in an RecBC-independent recombinational process of DNA repair. It may act with RecF and RecO. The sequence is that of Recombination protein RecR from Pseudomonas putida (strain ATCC 700007 / DSM 6899 / JCM 31910 / BCRC 17059 / LMG 24140 / F1).